Consider the following 152-residue polypeptide: Ubiquitin-conjugating enzyme E2 2 (152 aa).

The UBC core domain maps to 4–150; that stretch reads PARKRLMRDF…VREVVEQSWT (147 aa). Cysteine 88 serves as the catalytic Glycyl thioester intermediate.

The protein belongs to the ubiquitin-conjugating enzyme family. In terms of tissue distribution, expressed in all tissues examined. Lower levels found in leaves.

The catalysed reaction is S-ubiquitinyl-[E1 ubiquitin-activating enzyme]-L-cysteine + [E2 ubiquitin-conjugating enzyme]-L-cysteine = [E1 ubiquitin-activating enzyme]-L-cysteine + S-ubiquitinyl-[E2 ubiquitin-conjugating enzyme]-L-cysteine.. It functions in the pathway protein modification; protein ubiquitination. Accepts the ubiquitin from the E1 complex and catalyzes its covalent attachment to other proteins. The protein is Ubiquitin-conjugating enzyme E2 2 (UBC2) of Arabidopsis thaliana (Mouse-ear cress).